Consider the following 693-residue polypeptide: E3 ubiquitin-protein ligase MARCHF7 (693 aa).

Met1 is modified (N-acetylmethionine). Disordered regions lie at residues 1–43 (MESK…RDSS), 69–136 (ESEI…LGSF), 158–281 (LMDY…RRTT), 296–342 (FFSR…EGRA), 361–430 (LSQN…RDSN), 445–475 (AANR…RNPG), and 512–533 (WNST…PEKL). Composition is skewed to polar residues over residues 14–36 (VQPS…LNDS), 95–105 (SCTNCASTSAG), 112–132 (LNTV…SSMV), 167–184 (DFTT…SYSQ), and 192–215 (AVST…QTVP). Over residues 216-234 (SSRDSSRSSFRSHFSPRQS) the composition is skewed to low complexity. Polar residues predominate over residues 236-267 (SFRNSSHPAFSYFSSRNETPTISNSERGSSQR). Residues 268–279 (PYRESSDNEGRR) show a composition bias toward basic and acidic residues. Residues 296-305 (FFSRRSSQDS) show a composition bias toward low complexity. The span at 306-323 (LNTRSLSSENYISPRTLT) shows a compositional bias: polar residues. The residue at position 318 (Ser318) is a Phosphoserine. A compositionally biased stretch (low complexity) spans 324-337 (SQSRNNGTSSSSDV). The residue at position 390 (Ser390) is a Phosphoserine. Low complexity predominate over residues 451–463 (ASGASSSAAAGGS). Basic and acidic residues predominate over residues 517 to 533 (GKNDKAKSAPSRDPEKL). Residues 546–616 (DDEEEGDLCR…ELCKEKLQLN (71 aa)) form an RING-CH-type zinc finger. Residues Cys554, Cys557, Cys572, Cys574, His582, Cys585, Cys606, and Cys609 each coordinate Zn(2+). Thr688 bears the Phosphothreonine mark. Ser689 carries the post-translational modification Phosphoserine.

Expressed in brain, thymus, muscle and kidney.

The protein localises to the cytoplasm. The enzyme catalyses S-ubiquitinyl-[E2 ubiquitin-conjugating enzyme]-L-cysteine + [acceptor protein]-L-lysine = [E2 ubiquitin-conjugating enzyme]-L-cysteine + N(6)-ubiquitinyl-[acceptor protein]-L-lysine.. It functions in the pathway protein modification; protein ubiquitination. Its function is as follows. E3 ubiquitin-protein ligase which may specifically enhance the E2 activity of HIP2. E3 ubiquitin ligases accept ubiquitin from an E2 ubiquitin-conjugating enzyme in the form of a thioester and then directly transfer the ubiquitin to targeted substrates. May be involved in T-cell proliferation by regulating LIF secretion. May play a role in lysosome homeostasis. Promotes 'Lys-6', 'Lys-11' and 'Lys-63'-linked mixed polyubiquitination on ATG14 leading to the inhibition of autophagy by impairing the interaction between ATG14 and STX7. Participates in the dopamine-mediated negative regulation of the NLRP3 inflammasome by promoting its uibiquitination and subsequent degradation. The sequence is that of E3 ubiquitin-protein ligase MARCHF7 (Marchf7) from Mus musculus (Mouse).